Here is a 137-residue protein sequence, read N- to C-terminus: Cytochrome c2 (137 aa).

Positions 1–21 (MKISLTAATVAALVLAAPAFA) are cleaved as a signal peptide. Positions 34, 37, 38, and 117 each coordinate heme c.

The protein belongs to the cytochrome c family. Binds 1 heme c group covalently per subunit.

Functionally, cytochrome c2 is found mainly in purple, non-sulfur, photosynthetic bacteria where it functions as the electron donor to the oxidized bacteriochlorophyll in the photophosphorylation pathway. However, it may also have a role in the respiratory chain and is found in some non-photosynthetic bacteria. The chain is Cytochrome c2 (cycA) from Rhodobacter capsulatus (strain ATCC BAA-309 / NBRC 16581 / SB1003).